The following is a 437-amino-acid chain: Protein arginine methyltransferase NDUFAF7, mitochondrial (437 aa).

Residues methionine 1 to serine 42 constitute a mitochondrion transit peptide.

This sequence belongs to the NDUFAF7 family.

The protein localises to the mitochondrion. It catalyses the reaction L-arginyl-[protein] + 2 S-adenosyl-L-methionine = N(omega),N(omega)'-dimethyl-L-arginyl-[protein] + 2 S-adenosyl-L-homocysteine + 2 H(+). Its function is as follows. Arginine methyltransferase involved in the assembly or stability of mitochondrial NADH:ubiquinone oxidoreductase complex (complex I). Acts by mediating symmetric dimethylation of 'Arg-118' of ndufs2 after it assembles into the complex I, stabilizing the early intermediate complex. The protein is Protein arginine methyltransferase NDUFAF7, mitochondrial of Xenopus laevis (African clawed frog).